The primary structure comprises 288 residues: UPF0276 protein VP3015 (288 aa).

The protein belongs to the UPF0276 family.

This is UPF0276 protein VP3015 from Vibrio parahaemolyticus serotype O3:K6 (strain RIMD 2210633).